The primary structure comprises 1000 residues: Lysine-specific histone demethylase 1 (1000 aa).

Residues 104-123 (RRPAGRRGRPALNTSNSLER) are disordered. A coiled-coil region spans residues 107-137 (AGRRGRPALNTSNSLERNGTRYVSAEAPISV). An SWIRM domain is found at 153-249 (CYESAIASNL…YGCIYIISSL (97 aa)). FAD is bound by residues 260–302 (VAII…IYEA), E301, and 328–329 (LA). The demethylase activity stretch occupies residues 279–950 (LFAQYEQDFL…RCESQPIPED (672 aa)). The stretch at 434–529 (IGWYISIEAF…ADMLNSLAST (96 aa)) forms a coiled coil. The tract at residues 780 to 800 (TYGTKRNAQQALGKEGERENK) is disordered. The segment at residues 841-921 (SRPSANPYLL…NYSTRLEEYQ (81 aa)) is a DNA-binding region (HMG box). FAD is bound at residue 908 to 909 (AR). Over residues 959 to 972 (EQEDEHLHPEKEGM) the composition is skewed to basic and acidic residues. Positions 959–1000 (EQEDEHLHPEKEGMSVENSDDDYHDDLDYEDSISEVFPDNFS) are disordered. The segment covering 976-991 (NSDDDYHDDLDYEDSI) has biased composition (acidic residues).

The protein belongs to the flavin monoamine oxidase family. As to quaternary structure, component of the SWM histone demethylase complex composed of at least lsd1, lsd2, phf1 and phf2. Interacts directly with lsd2. FAD serves as cofactor.

The protein localises to the nucleus. Catalytic component of the SWM histone demethylase complex that specifically demethylates H3K9me2, a specific tag for epigenetic transcriptional activation, thereby acting as a corepressor. Acts by oxidizing the substrate by FAD to generate the corresponding imine that is subsequently hydrolyzed. Has a role in regulating heterochromatin propagation and euchromatic transcription. Also has a gene activating role. The chain is Lysine-specific histone demethylase 1 (lsd1) from Schizosaccharomyces pombe (strain 972 / ATCC 24843) (Fission yeast).